Here is a 431-residue protein sequence, read N- to C-terminus: Glucose-1-phosphate adenylyltransferase (431 aa).

Residue lysine 39 coordinates beta-D-fructose 1,6-bisphosphate. Arginine 40, histidine 46, and arginine 52 together coordinate AMP. Tyrosine 114 contributes to the alpha-D-glucose 1-phosphate binding site. Residue arginine 130 coordinates AMP. Alpha-D-glucose 1-phosphate is bound by residues glycine 179, 194-195 (EK), and serine 212. Glutamate 370 and arginine 386 together coordinate AMP. Residues 419-423 (REMLR) and 429-431 (QER) contribute to the beta-D-fructose 1,6-bisphosphate site.

This sequence belongs to the bacterial/plant glucose-1-phosphate adenylyltransferase family. Homotetramer.

It catalyses the reaction alpha-D-glucose 1-phosphate + ATP + H(+) = ADP-alpha-D-glucose + diphosphate. Its pathway is glycan biosynthesis; glycogen biosynthesis. Allosterically activated by fructose-1,6-bisphosphate (F16BP) and inhibited by AMP. Its function is as follows. Involved in the biosynthesis of ADP-glucose, a building block required for the elongation reactions to produce glycogen. Catalyzes the reaction between ATP and alpha-D-glucose 1-phosphate (G1P) to produce pyrophosphate and ADP-Glc. This chain is Glucose-1-phosphate adenylyltransferase, found in Escherichia coli O45:K1 (strain S88 / ExPEC).